Reading from the N-terminus, the 837-residue chain is Periplasmic nitrate reductase (837 aa).

Residues 1–32 constitute a signal peptide (tat-type signal); it reads MTSPKLDRRQMLKLEAAAIAAAAAGLPVPALA. One can recognise a 4Fe-4S Mo/W bis-MGD-type domain in the interval 44–100; sequence LKWDKAACRFCGTGCSVMVATKENRVVATHGDIKAEVNRGLNCVKGYFLSKIMYGHD. Positions 51, 54, 58, and 86 each coordinate [4Fe-4S] cluster. Mo-bis(molybdopterin guanine dinucleotide) is bound by residues Lys-88, Gln-155, Asn-180, Cys-184, 217-224, 248-252, 267-269, Met-378, Gln-382, Asn-488, 514-515, Lys-537, Asp-564, and 724-733; these read WGSNMAEM, STFEH, QTD, SD, and TGRVLEHWHS. Substrate is bound at residue Trp-800. Mo-bis(molybdopterin guanine dinucleotide) contacts are provided by Asn-808 and Lys-825.

Belongs to the prokaryotic molybdopterin-containing oxidoreductase family. NasA/NapA/NarB subfamily. In terms of assembly, component of the periplasmic nitrate reductase NapAB complex composed of NapA and NapB. It depends on [4Fe-4S] cluster as a cofactor. The cofactor is Mo-bis(molybdopterin guanine dinucleotide). Predicted to be exported by the Tat system. The position of the signal peptide cleavage has not been experimentally proven.

It is found in the periplasm. It catalyses the reaction 2 Fe(II)-[cytochrome] + nitrate + 2 H(+) = 2 Fe(III)-[cytochrome] + nitrite + H2O. In terms of biological role, catalytic subunit of the periplasmic nitrate reductase complex NapAB. Receives electrons from NapB and catalyzes the reduction of nitrate to nitrite. In Bradyrhizobium diazoefficiens (strain JCM 10833 / BCRC 13528 / IAM 13628 / NBRC 14792 / USDA 110), this protein is Periplasmic nitrate reductase.